The chain runs to 223 residues: MNSIWARLRLASSQLPIGGYSYSQGLEAALDNGWVRDAESARTWLVDQLQLNLARFEAPLLAGLLRAALAGDWAACDAASERHRASRETRELAQESRQMGFSLQQLLEALPELDDAGRAWLARQDPPNLAAAWAMAARAWRLDAEEALSAWFWNWLENQLAVLMKTLPLGQLAAQKLASSLLPDLDRACAEALRRPAVEGSAAFGLALASMTHETQYSRLFRS.

The protein belongs to the UreF family. UreD, UreF and UreG form a complex that acts as a GTP-hydrolysis-dependent molecular chaperone, activating the urease apoprotein by helping to assemble the nickel containing metallocenter of UreC. The UreE protein probably delivers the nickel.

The protein localises to the cytoplasm. Required for maturation of urease via the functional incorporation of the urease nickel metallocenter. In Pseudomonas paraeruginosa (strain DSM 24068 / PA7) (Pseudomonas aeruginosa (strain PA7)), this protein is Urease accessory protein UreF.